Reading from the N-terminus, the 435-residue chain is S-phase entry cyclin-5 (435 aa).

Disordered stretches follow at residues 36-70 and 104-126; these read KRAL…NPLS and NDRT…DAAS. Residues 41-52 show a composition bias toward low complexity; sequence KNDSSSKQQVQD. Acidic residues predominate over residues 110–124; sequence EQEEEEEEEGEDDDA.

This sequence belongs to the cyclin family. Cyclin AB subfamily.

In terms of biological role, required for efficient progression through S phase and possibly for the normal progression through meiosis. Interacts with CDC28. This Saccharomyces cerevisiae (strain ATCC 204508 / S288c) (Baker's yeast) protein is S-phase entry cyclin-5 (CLB5).